The primary structure comprises 341 residues: Transmembrane protein 120A-A (341 aa).

The Cytoplasmic segment spans residues 1–131 (MLFNPTGLTE…KQSKFAYKDE (131 aa)). Lys-129 lines the CoA pocket. Residues 132 to 151 (YEKFKLYLTVLLLFFSFTCR) traverse the membrane as a helical segment. Residues 152 to 157 (FLVSYR) are Extracellular-facing. Residues 158–176 (VVDALFNFLLVWYYCTLTI) form a helical membrane-spanning segment. The Cytoplasmic segment spans residues 177–189 (RESILINNGSKIK). CoA-binding residues include Ser-186 and Lys-187. The chain crosses the membrane as a helical span at residues 190 to 208 (GWWVFQHYVSTFLSGVMLT). The Extracellular portion of the chain corresponds to 209–217 (WPDGELYQM). The chain crosses the membrane as a helical span at residues 218–239 (FRNQFLSYSMYINFVQFFQYYY). Residues Gln-236, Tyr-239, Gln-240, and His-282 each coordinate CoA. Residues 240–269 (QSGCLYRLRALGERHNMDLTVEGFQSWMWR) lie on the Cytoplasmic side of the membrane. The helical transmembrane segment at 270 to 293 (GLTFLLPFLFLGHFFQLYNGITLF) threads the bilayer. Topologically, residues 294–303 (QMTQLPEWKE) are extracellular. Residues 304–329 (WQVLMCGSTFLVLFMGNFFTTLGVVY) traverse the membrane as a helical segment. At 330–341 (HKYMDQDKAKGL) the chain is on the cytoplasmic side. Lys-331 contributes to the CoA binding site.

The protein belongs to the TMEM120 family. Homodimer.

It is found in the cell membrane. It localises to the nucleus inner membrane. The protein resides in the endoplasmic reticulum. In terms of biological role, multifunctional protein involved in mechanosensation, and plays an essential role in lipid metabolism. May function as a potential ion channel involved in sensing mechanical stimuli. TMEM120A is structurally similar to a lipid-modifying enzyme, ELOVL7, and contains a bound coenzyme A molecule, which suggests it might function as an enzyme in lipid metabolism. In Danio rerio (Zebrafish), this protein is Transmembrane protein 120A-A (tmem120aa).